The primary structure comprises 188 residues: MAEQQGREPECPVCWNPFNNTFHTPKVLDCCHSFCVECLAHISLVTPTRRRLLCPLCRHPTVLASGQPVTDLPTDTAVLTLLRLEPHHVILEGHQLCLKDQPKSRYFLRQPRVYTLDLGPEPASQAGQPQDVGPSTRPVPIRSRYSLRECFRNPHFRIFAYMMAVILCGTVLFIFSIFCTRRFFWGVG.

Over 1–157 the chain is Cytoplasmic; it reads MAEQQGREPE…RECFRNPHFR (157 aa). The segment at 11–58 adopts an RING-type zinc-finger fold; the sequence is CPVCWNPFNNTFHTPKVLDCCHSFCVECLAHISLVTPTRRRLLCPLCR. A helical; Anchor for type IV membrane protein transmembrane segment spans residues 158–178; the sequence is IFAYMMAVILCGTVLFIFSIF. The Lumenal segment spans residues 179–188; sequence CTRRFFWGVG.

Interacts with FATE1. Interacts with SEC16A. Interacts with BCL2L1. Post-translationally, autoubiquitinated (in vitro).

It localises to the endoplasmic reticulum membrane. The protein localises to the endoplasmic reticulum. Its subcellular location is the golgi apparatus. The protein resides in the cis-Golgi network membrane. It is found in the lysosome. It carries out the reaction S-ubiquitinyl-[E2 ubiquitin-conjugating enzyme]-L-cysteine + [acceptor protein]-L-lysine = [E2 ubiquitin-conjugating enzyme]-L-cysteine + N(6)-ubiquitinyl-[acceptor protein]-L-lysine.. It functions in the pathway protein modification; protein ubiquitination. Its function is as follows. Acts as an E3 ubiquitin ligase catalyzing the covalent attachment of ubiquitin moieties onto substrate proteins. Triggers apoptosis in response to prolonged ER stress by mediating the polyubiquitination and subsequent proteasomal degradation of BCL2L1. May collaborate with FATE1 to restrain BIK protein levels thus regulating apoptotic signaling. In Bos taurus (Bovine), this protein is E3 ubiquitin-protein ligase RNF183 (RNF183).